The primary structure comprises 413 residues: Multidrug resistance protein MdtA (413 aa).

The signal sequence occupies residues 1-25; sequence MKNKRRTYFFQFAVLAVVIATAYFA. The disordered stretch occupies residues 394 to 413; the sequence is ANTYDQMDKSKPSNSKVENT.

It belongs to the membrane fusion protein (MFP) (TC 8.A.1) family. As to quaternary structure, part of a tripartite efflux system composed of MdtA, MdtB and MdtC.

It localises to the cell inner membrane. The chain is Multidrug resistance protein MdtA from Xenorhabdus bovienii (strain SS-2004) (Xenorhabdus nematophila subsp. bovienii).